A 134-amino-acid polypeptide reads, in one-letter code: Replication enhancer protein (134 aa).

The protein belongs to the geminiviridae replication enhancer protein family. In terms of assembly, homooligomer. Interacts with the replication-associated protein (REP). Interacts with host proliferating cell nuclear antigen (PCNA). Interacts with host retinoblastoma-related protein 1 (RBR1), and may thereby deregulate the host cell cycle. Oligomerization and interaction with PCNA are necessary for optimal replication enhancement.

Functionally, increases viral DNA accumulation. Enhances infectivity and symptom expression. The sequence is that of Replication enhancer protein from Cynanchum acutum (Tomato).